Consider the following 185-residue polypeptide: Threonylcarbamoyl-AMP synthase (185 aa).

The YrdC-like domain maps to 4–185 (SFRAQCAARV…LVTGQVIRPA (182 aa)).

The protein belongs to the SUA5 family. TsaC subfamily.

Its subcellular location is the cytoplasm. The enzyme catalyses L-threonine + hydrogencarbonate + ATP = L-threonylcarbamoyladenylate + diphosphate + H2O. In terms of biological role, required for the formation of a threonylcarbamoyl group on adenosine at position 37 (t(6)A37) in tRNAs that read codons beginning with adenine. Catalyzes the conversion of L-threonine, HCO(3)(-)/CO(2) and ATP to give threonylcarbamoyl-AMP (TC-AMP) as the acyladenylate intermediate, with the release of diphosphate. The chain is Threonylcarbamoyl-AMP synthase from Pseudomonas paraeruginosa (strain DSM 24068 / PA7) (Pseudomonas aeruginosa (strain PA7)).